Here is a 415-residue protein sequence, read N- to C-terminus: Succinate--CoA ligase [GDP-forming] subunit beta, mitochondrial (415 aa).

The transit peptide at 1–19 (MLRAAGNLSKSMMKSQRRF) directs the protein to the mitochondrion. The ATP-grasp domain occupies 28-258 (KEILEKHGCS…SAAYRQKEIF (231 aa)). GTP-binding positions include glutamine 39, 72-74 (GRG), and valine 130. Asparagine 227 and aspartate 241 together coordinate Mg(2+). Substrate is bound by residues asparagine 292 and 349–351 (GIV).

It belongs to the succinate/malate CoA ligase beta subunit family. GTP-specific subunit beta subfamily. As to quaternary structure, heterodimer of an alpha and a beta subunit. The beta subunit determines specificity for GTP. Requires Mg(2+) as cofactor.

It is found in the mitochondrion. The catalysed reaction is GTP + succinate + CoA = succinyl-CoA + GDP + phosphate. It participates in carbohydrate metabolism; tricarboxylic acid cycle; succinate from succinyl-CoA (ligase route): step 1/1. Functionally, GTP-specific succinyl-CoA synthetase functions in the citric acid cycle (TCA), coupling the hydrolysis of succinyl-CoA to the synthesis of GTP and thus represents the only step of substrate-level phosphorylation in the TCA. The beta subunit provides nucleotide specificity of the enzyme and binds the substrate succinate, while the binding sites for coenzyme A and phosphate are found in the alpha subunit. In Caenorhabditis elegans, this protein is Succinate--CoA ligase [GDP-forming] subunit beta, mitochondrial.